The sequence spans 185 residues: Acireductone dioxygenase (185 aa).

Fe(2+) contacts are provided by His-96, His-98, Glu-102, and His-140. Ni(2+) is bound by residues His-96, His-98, Glu-102, and His-140.

The protein belongs to the acireductone dioxygenase (ARD) family. Monomer. Fe(2+) is required as a cofactor. Ni(2+) serves as cofactor.

The enzyme catalyses 1,2-dihydroxy-5-(methylsulfanyl)pent-1-en-3-one + O2 = 3-(methylsulfanyl)propanoate + CO + formate + 2 H(+). It catalyses the reaction 1,2-dihydroxy-5-(methylsulfanyl)pent-1-en-3-one + O2 = 4-methylsulfanyl-2-oxobutanoate + formate + 2 H(+). It participates in amino-acid biosynthesis; L-methionine biosynthesis via salvage pathway; L-methionine from S-methyl-5-thio-alpha-D-ribose 1-phosphate: step 5/6. In terms of biological role, catalyzes 2 different reactions between oxygen and the acireductone 1,2-dihydroxy-3-keto-5-methylthiopentene (DHK-MTPene) depending upon the metal bound in the active site. Fe-containing acireductone dioxygenase (Fe-ARD) produces formate and 2-keto-4-methylthiobutyrate (KMTB), the alpha-ketoacid precursor of methionine in the methionine recycle pathway. Ni-containing acireductone dioxygenase (Ni-ARD) produces methylthiopropionate, carbon monoxide and formate, and does not lie on the methionine recycle pathway. In Hahella chejuensis (strain KCTC 2396), this protein is Acireductone dioxygenase.